A 125-amino-acid chain; its full sequence is Small ribosomal subunit protein uS12 (125 aa).

A disordered region spans residues 9-28 (RSERSKLKKKTKSPALKQCP). Asp-89 bears the 3-methylthioaspartic acid mark. The disordered stretch occupies residues 104–125 (AQGVKDRKQGRSKYGTKRPKKA). Residues 113–125 (GRSKYGTKRPKKA) show a composition bias toward basic residues.

The protein belongs to the universal ribosomal protein uS12 family. Part of the 30S ribosomal subunit. Contacts proteins S8 and S17. May interact with IF1 in the 30S initiation complex.

In terms of biological role, with S4 and S5 plays an important role in translational accuracy. Functionally, interacts with and stabilizes bases of the 16S rRNA that are involved in tRNA selection in the A site and with the mRNA backbone. Located at the interface of the 30S and 50S subunits, it traverses the body of the 30S subunit contacting proteins on the other side and probably holding the rRNA structure together. The combined cluster of proteins S8, S12 and S17 appears to hold together the shoulder and platform of the 30S subunit. This chain is Small ribosomal subunit protein uS12, found in Rippkaea orientalis (strain PCC 8801 / RF-1) (Cyanothece sp. (strain PCC 8801)).